We begin with the raw amino-acid sequence, 265 residues long: Small ribosomal subunit protein eS1 (265 aa).

Residues 234-256 are disordered; sequence EGSTTTSKGVTSEGGEKVDRVDG. Over residues 247 to 256 the composition is skewed to basic and acidic residues; it reads GGEKVDRVDG.

The protein belongs to the eukaryotic ribosomal protein eS1 family. Component of the small ribosomal subunit. Mature ribosomes consist of a small (40S) and a large (60S) subunit. The 40S subunit contains about 33 different proteins and 1 molecule of RNA (18S). The 60S subunit contains about 49 different proteins and 3 molecules of RNA (28S, 5.8S and 5S).

The protein resides in the cytoplasm. The chain is Small ribosomal subunit protein eS1 from Aplysia californica (California sea hare).